We begin with the raw amino-acid sequence, 231 residues long: Adenosylcobinamide-GDP ribazoletransferase (231 aa).

6 helical membrane-spanning segments follow: residues 24 to 44 (LWAFPLVALVSSALPTLILYL), 46 to 66 (LPLSNLLAVLALYWTIGLLHL), 96 to 116 (IAGLFAVVIVLLLQVYSLQLL), 159 to 176 (LALGTLLYVLLGLSVVLF), 181 to 198 (LAGILGLLFGVHIIRISL), and 209 to 229 (LGATAEITRAGTLVVMALVWW).

It belongs to the CobS family. It depends on Mg(2+) as a cofactor.

It is found in the cell membrane. The catalysed reaction is alpha-ribazole + adenosylcob(III)inamide-GDP = adenosylcob(III)alamin + GMP + H(+). It catalyses the reaction alpha-ribazole 5'-phosphate + adenosylcob(III)inamide-GDP = adenosylcob(III)alamin 5'-phosphate + GMP + H(+). It functions in the pathway cofactor biosynthesis; adenosylcobalamin biosynthesis; adenosylcobalamin from cob(II)yrinate a,c-diamide: step 7/7. Functionally, joins adenosylcobinamide-GDP and alpha-ribazole to generate adenosylcobalamin (Ado-cobalamin). Also synthesizes adenosylcobalamin 5'-phosphate from adenosylcobinamide-GDP and alpha-ribazole 5'-phosphate. The polypeptide is Adenosylcobinamide-GDP ribazoletransferase (Thermococcus kodakarensis (strain ATCC BAA-918 / JCM 12380 / KOD1) (Pyrococcus kodakaraensis (strain KOD1))).